Consider the following 428-residue polypeptide: MNQSETLFAQAKTVIPGGVNSPVRAFNGVGGSPIFFTRGEGAYLFDEDDKKYIDYVASWGSMILGHTNQAVIIAVKTTLENGLGFGAPTQIETKLAEKVCELMPSIELVRMVSSGTEATMSAIRLARGHTGRDKIIKFEGCYHGHSDSLLIKAGSGALTLGVPTSPGVPKDFAKHTLTLEYNNIDQVCEVLSEVGAEVACIIVEPVAGNMNCIPPIDGFLQVLRELCDEYGVILVFDEVMTGFRVALGGAQAFYNVKPDLTTLGKVIGGGLPVGAFGGKREIMQSIAPLGPVYQAGTLSGNPISMSAGLVMLNVLSKDENFYTILNTKVQKLTKGILAKAKENNIGMTANVVGGMFGLFFTDSQSVTNFKETSQCNIELFKKFFHLMLAEGVYMAPSAYEAGFVSSAHSDTDIQNTIDAAGRAFIKLT.

At Lys265 the chain carries N6-(pyridoxal phosphate)lysine.

Belongs to the class-III pyridoxal-phosphate-dependent aminotransferase family. HemL subfamily. In terms of assembly, homodimer. Requires pyridoxal 5'-phosphate as cofactor.

It localises to the cytoplasm. It catalyses the reaction (S)-4-amino-5-oxopentanoate = 5-aminolevulinate. It participates in porphyrin-containing compound metabolism; protoporphyrin-IX biosynthesis; 5-aminolevulinate from L-glutamyl-tRNA(Glu): step 2/2. The polypeptide is Glutamate-1-semialdehyde 2,1-aminomutase (Ruthia magnifica subsp. Calyptogena magnifica).